Reading from the N-terminus, the 228-residue chain is Uracil-DNA glycosylase (228 aa).

Asp-64 (proton acceptor) is an active-site residue.

The protein belongs to the uracil-DNA glycosylase (UDG) superfamily. UNG family. Monomer.

It is found in the cytoplasm. It catalyses the reaction Hydrolyzes single-stranded DNA or mismatched double-stranded DNA and polynucleotides, releasing free uracil.. In terms of biological role, excises uracil residues from the DNA which can arise as a result of misincorporation of dUMP residues by DNA polymerase or due to deamination of cytosine. The polypeptide is Uracil-DNA glycosylase (Escherichia coli O6:H1 (strain CFT073 / ATCC 700928 / UPEC)).